We begin with the raw amino-acid sequence, 427 residues long: MRYSNSEKAMAKAEELMPGGVNSPVRAFKSVDTPAIFMDHGEGSRIYDIDGNEYIDYVLSWGPLILGHKNKQVIEKIHEAVDKGTSFGASTLQENKLAELVIERVPSIEKVRMVSSGTEATLDTLRLARGYTGRNKIVKFVGCYHGHSDSLLIKAGSGVATLGLPDSPGVPEGIAKNTITVPYNDLDAIKVAFEEFGDDIAGVIVEPVAGNMGVVPPVEGFLQGLRDITTAYGSLLIFDEVMTGFRVGYNCAQGYFDVTPDLTCLGKVIGGGLPVGAFGGKKEIMDQIAPTGDIYQAGTLSGNPLAMTSGYETLSQLTPETYDYFNKLGDLLEQGLKDVFAKHNVPITVNRAGSMIGYFLNAGPVTNFEQANNSDLEMFSQMYREMAKEGVFLPPSQFEGTFLSTSHTEEDINKTIQAFDTALSRIV.

At K267 the chain carries N6-(pyridoxal phosphate)lysine.

Belongs to the class-III pyridoxal-phosphate-dependent aminotransferase family. HemL subfamily. Homodimer. The cofactor is pyridoxal 5'-phosphate.

The protein localises to the cytoplasm. The catalysed reaction is (S)-4-amino-5-oxopentanoate = 5-aminolevulinate. It functions in the pathway porphyrin-containing compound metabolism; protoporphyrin-IX biosynthesis; 5-aminolevulinate from L-glutamyl-tRNA(Glu): step 2/2. This chain is Glutamate-1-semialdehyde 2,1-aminomutase 2, found in Staphylococcus saprophyticus subsp. saprophyticus (strain ATCC 15305 / DSM 20229 / NCIMB 8711 / NCTC 7292 / S-41).